The following is a 123-amino-acid chain: MKKEEIIQAIKEMTVLELNELVEACEEEFGVSAAAPVAVAGAGAAAGAGAAEEKTEFDVVLADAGSEKIKVIKAVREVTGLGLKEAKALVDGAPKTLKEAASKEDGEAIKAKLEEVGAKVELK.

It belongs to the bacterial ribosomal protein bL12 family. In terms of assembly, homodimer. Part of the ribosomal stalk of the 50S ribosomal subunit. Forms a multimeric L10(L12)X complex, where L10 forms an elongated spine to which 2 to 4 L12 dimers bind in a sequential fashion. Binds GTP-bound translation factors.

Functionally, forms part of the ribosomal stalk which helps the ribosome interact with GTP-bound translation factors. Is thus essential for accurate translation. This chain is Large ribosomal subunit protein bL12, found in Clostridium botulinum (strain ATCC 19397 / Type A).